The primary structure comprises 355 residues: Enhancer of mRNA-decapping protein 1 (355 aa).

Disordered stretches follow at residues 1–146 (MSSD…VDGM), 210–230 (MSQP…SQPM), and 301–330 (NSTA…KSSQ). Polar residues predominate over residues 39-49 (AQKQQLPNGEQ). Positions 57 to 67 (KQSRKRGSGRQ) are enriched in basic residues. Residues 91–110 (SIPSGSAGSESAQKETSAGQ) show a composition bias toward polar residues. Over residues 123 to 142 (VPAGGPAGKSSSEPASASSA) the composition is skewed to low complexity.

Belongs to the EDC family.

The protein resides in the cytoplasm. MRNA-binding protein which stimulates mRNA decapping. In Eremothecium gossypii (strain ATCC 10895 / CBS 109.51 / FGSC 9923 / NRRL Y-1056) (Yeast), this protein is Enhancer of mRNA-decapping protein 1 (EDC1).